The chain runs to 655 residues: Tumor necrosis factor receptor superfamily member 21 (655 aa).

The N-terminal stretch at 1-41 (MGTRASSITALASCSRTAGQVGATMVAGSLLLLGFLSTITA) is a signal peptide. At 42 to 349 (QPEQKTLSLP…AHKHFDINEH (308 aa)) the chain is on the extracellular side. 4 TNFR-Cys repeats span residues 50-88 (LPGT…LRVC), 90-131 (SCPA…DREC), 133-167 (CPPG…EDVR), and 170-211 (QCAR…DNVC). 9 disulfide bridges follow: Cys-67/Cys-80, Cys-70/Cys-88, Cys-91/Cys-106, Cys-109/Cys-123, Cys-113/Cys-131, Cys-133/Cys-144, Cys-150/Cys-168, Cys-171/Cys-186, and Cys-192/Cys-211. Residue Asn-82 is glycosylated (N-linked (GlcNAc...) asparagine). The N-linked (GlcNAc...) asparagine glycan is linked to Asn-141. 2 disordered regions span residues 222–305 (PPSS…QAPH) and 318–339 (EATG…PRQN). Composition is skewed to polar residues over residues 241–262 (VPSS…TASV) and 276–302 (PDNT…THQQ). N-linked (GlcNAc...) asparagine glycans are attached at residues Asn-252, Asn-257, Asn-278, and Asn-289. A compositionally biased stretch (basic residues) spans 330-339 (APKRGHPRQN). The chain crosses the membrane as a helical span at residues 350 to 370 (LPWMIVLFLLLVLVLIVVCSI). The S-palmitoyl cysteine moiety is linked to residue Cys-368. The Cytoplasmic segment spans residues 371–655 (RKSSRTLKKG…SVYSHLPDLL (285 aa)). The Death domain occupies 415–498 (GIDILKLVAA…DVVEKIRGLM (84 aa)).

As to quaternary structure, associates with TRADD. Interacts with NGFR. Interacts with CASP8. Post-translationally, oxidized in response to reactive oxygen species (ROS), leading to endocytosis. In terms of tissue distribution, detected in spleen B-cells (at protein level). Ubiquitous. Highly expressed in adult spleen, thymus, testis, prostate, ovary, small intestine, colon, brain, lung and kidney, and in fetal brain, liver and lung. Detected at lower levels in adult peripheral blood leukocytes, lung, and in fetal muscle, heart, kidney, small intestine and skin. Detected in T-cells, B-cells and monocytes. In T-cells expression is highest in Th0 cells, intermediate in Th2 cells and lower in Th1 cells. Expressed at low levels in proliferating progenitors in the spinal cord, but is highly expressed by differentiating neurons within the spinal cord and adjacent dorsal root ganglia.

It localises to the cell membrane. Its function is as follows. Promotes apoptosis, possibly via a pathway that involves the activation of NF-kappa-B. Can also promote apoptosis mediated by BAX and by the release of cytochrome c from the mitochondria into the cytoplasm. Trophic-factor deprivation triggers the cleavage of surface APP by beta-secretase to release sAPP-beta which is further cleaved to release an N-terminal fragment of APP (N-APP). Negatively regulates oligodendrocyte survival, maturation and myelination. Plays a role in signaling cascades triggered by stimulation of T-cell receptors, in the adaptive immune response and in the regulation of T-cell differentiation and proliferation. Negatively regulates T-cell responses and the release of cytokines such as IL4, IL5, IL10, IL13 and IFNG by Th2 cells. Negatively regulates the production of IgG, IgM and IgM in response to antigens. May inhibit the activation of JNK in response to T-cell stimulation. Also acts as a regulator of pyroptosis: recruits CASP8 in response to reactive oxygen species (ROS) and subsequent oxidation, leading to activation of GSDMC. The chain is Tumor necrosis factor receptor superfamily member 21 (Tnfrsf21) from Mus musculus (Mouse).